Consider the following 244-residue polypeptide: tRNA pseudouridine synthase A (244 aa).

Aspartate 52 acts as the Nucleophile in catalysis. Tyrosine 110 contributes to the substrate binding site.

This sequence belongs to the tRNA pseudouridine synthase TruA family. In terms of assembly, homodimer.

The enzyme catalyses uridine(38/39/40) in tRNA = pseudouridine(38/39/40) in tRNA. Formation of pseudouridine at positions 38, 39 and 40 in the anticodon stem and loop of transfer RNAs. The chain is tRNA pseudouridine synthase A from Clostridium botulinum (strain Eklund 17B / Type B).